The sequence spans 265 residues: Sulfur carrier protein FdhD (265 aa).

Residue cysteine 107 is the Cysteine persulfide intermediate of the active site.

It belongs to the FdhD family.

It localises to the cytoplasm. In terms of biological role, required for formate dehydrogenase (FDH) activity. Acts as a sulfur carrier protein that transfers sulfur from IscS to the molybdenum cofactor prior to its insertion into FDH. The chain is Sulfur carrier protein FdhD from Staphylococcus aureus (strain JH9).